The following is a 455-amino-acid chain: Chromosomal replication initiator protein DnaA (455 aa).

The domain I, interacts with DnaA modulators stretch occupies residues 1–74 (MSEQEIWEKV…LYEAIGHEIA (74 aa)). The interval 74–116 (APVFYTEEELKSLHTSEQKEENQPEQPAKKYTPGVDEAVIGGE) is domain II. The span at 85 to 95 (SLHTSEQKEEN) shows a compositional bias: basic and acidic residues. Residues 85-104 (SLHTSEQKEENQPEQPAKKY) form a disordered region. The tract at residues 117–333 (QFNTHNTFET…GALTRVLAFS (217 aa)) is domain III, AAA+ region. Positions 161, 163, 164, and 165 each coordinate ATP. Positions 334 to 455 (KLQGQPITTE…ENLEKEIRNQ (122 aa)) are domain IV, binds dsDNA.

Belongs to the DnaA family. Oligomerizes as a right-handed, spiral filament on DNA at oriC.

The protein resides in the cytoplasm. In terms of biological role, plays an essential role in the initiation and regulation of chromosomal replication. ATP-DnaA binds to the origin of replication (oriC) to initiate formation of the DNA replication initiation complex once per cell cycle. Binds the DnaA box (a 9 base pair repeat at the origin) and separates the double-stranded (ds)DNA. Forms a right-handed helical filament on oriC DNA; dsDNA binds to the exterior of the filament while single-stranded (ss)DNA is stabiized in the filament's interior. The ATP-DnaA-oriC complex binds and stabilizes one strand of the AT-rich DNA unwinding element (DUE), permitting loading of DNA polymerase. After initiation quickly degrades to an ADP-DnaA complex that is not apt for DNA replication. Binds acidic phospholipids. The chain is Chromosomal replication initiator protein DnaA from Staphylococcus saprophyticus subsp. saprophyticus (strain ATCC 15305 / DSM 20229 / NCIMB 8711 / NCTC 7292 / S-41).